A 512-amino-acid polypeptide reads, in one-letter code: tRNA-2-methylthio-N(6)-dimethylallyladenosine synthase (512 aa).

The interval 1–20 (MLQQADGVSPDRSSCDTPAP) is disordered. The MTTase N-terminal domain occupies 21–137 (RTFEVRTYGC…LPTLLDRARH (117 aa)). Residues C30, C66, C100, C174, C178, and C181 each coordinate [4Fe-4S] cluster. Positions 160-397 (RESAYAAWVS…ELQERISWEE (238 aa)) constitute a Radical SAM core domain. Positions 399–469 (RAQIGREVEL…PHHLIADAGP (71 aa)) constitute a TRAM domain. The span at 470–486 (AEHRRTRAGDAHAEGRT) shows a compositional bias: basic and acidic residues. Residues 470 to 512 (AEHRRTRAGDAHAEGRTPKTGVGLGMPGIGAPEPAPVTQGCAL) are disordered.

It belongs to the methylthiotransferase family. MiaB subfamily. As to quaternary structure, monomer. Requires [4Fe-4S] cluster as cofactor.

Its subcellular location is the cytoplasm. The catalysed reaction is N(6)-dimethylallyladenosine(37) in tRNA + (sulfur carrier)-SH + AH2 + 2 S-adenosyl-L-methionine = 2-methylsulfanyl-N(6)-dimethylallyladenosine(37) in tRNA + (sulfur carrier)-H + 5'-deoxyadenosine + L-methionine + A + S-adenosyl-L-homocysteine + 2 H(+). Functionally, catalyzes the methylthiolation of N6-(dimethylallyl)adenosine (i(6)A), leading to the formation of 2-methylthio-N6-(dimethylallyl)adenosine (ms(2)i(6)A) at position 37 in tRNAs that read codons beginning with uridine. This is tRNA-2-methylthio-N(6)-dimethylallyladenosine synthase from Mycolicibacterium gilvum (strain PYR-GCK) (Mycobacterium gilvum (strain PYR-GCK)).